The following is a 270-amino-acid chain: tRNA pseudouridine synthase A (270 aa).

The active-site Nucleophile is aspartate 52. Tyrosine 110 contacts substrate.

This sequence belongs to the tRNA pseudouridine synthase TruA family. As to quaternary structure, homodimer.

The catalysed reaction is uridine(38/39/40) in tRNA = pseudouridine(38/39/40) in tRNA. In terms of biological role, formation of pseudouridine at positions 38, 39 and 40 in the anticodon stem and loop of transfer RNAs. The sequence is that of tRNA pseudouridine synthase A from Roseiflexus castenholzii (strain DSM 13941 / HLO8).